A 430-amino-acid chain; its full sequence is C4-dicarboxylate transport protein (430 aa).

The next 9 helical transmembrane spans lie at S8–P28, L44–M64, I76–V96, A144–L164, V184–M204, L222–A242, V289–L309, V326–V346, and I352–I372.

This sequence belongs to the dicarboxylate/amino acid:cation symporter (DAACS) (TC 2.A.23) family.

The protein localises to the cell inner membrane. Its function is as follows. Responsible for the transport of dicarboxylates such as succinate, fumarate, and malate from the periplasm across the membrane. The chain is C4-dicarboxylate transport protein from Yersinia enterocolitica serotype O:8 / biotype 1B (strain NCTC 13174 / 8081).